Here is a 290-residue protein sequence, read N- to C-terminus: Eukaryotic translation initiation factor 3 subunit G (290 aa).

The disordered stretch occupies residues 1–34 (MSRLGNRAADWADDEEFDDPSALPAQQVTTNKDG). The RRM domain occupies 210–288 (ATLRVTNVSE…LILRVEFAKR (79 aa)).

The protein belongs to the eIF-3 subunit G family. Component of the eukaryotic translation initiation factor 3 (eIF-3) complex.

It is found in the cytoplasm. Its function is as follows. RNA-binding component of the eukaryotic translation initiation factor 3 (eIF-3) complex, which is involved in protein synthesis of a specialized repertoire of mRNAs and, together with other initiation factors, stimulates binding of mRNA and methionyl-tRNAi to the 40S ribosome. The eIF-3 complex specifically targets and initiates translation of a subset of mRNAs involved in cell proliferation. This subunit can bind 18S rRNA. This chain is Eukaryotic translation initiation factor 3 subunit G, found in Neosartorya fischeri (strain ATCC 1020 / DSM 3700 / CBS 544.65 / FGSC A1164 / JCM 1740 / NRRL 181 / WB 181) (Aspergillus fischerianus).